The primary structure comprises 389 residues: Phospho-N-acetylmuramoyl-pentapeptide-transferase (389 aa).

Helical transmembrane passes span 21 to 41 (FITF…LFFG), 70 to 90 (GTPT…TLLW), 97 to 117 (FVWV…VDDY), 134 to 154 (YMWQ…SVSA), 189 to 209 (TISY…VIVG), 222 to 242 (GLAI…AYLT), 259 to 279 (AGEL…FLWF), 286 to 306 (VFMG…IAVI), 311 to 331 (IVLF…MIQV), and 366 to 386 (QVVV…LSTL).

Belongs to the glycosyltransferase 4 family. MraY subfamily. Mg(2+) is required as a cofactor.

Its subcellular location is the cell inner membrane. It catalyses the reaction UDP-N-acetyl-alpha-D-muramoyl-L-alanyl-gamma-D-glutamyl-meso-2,6-diaminopimeloyl-D-alanyl-D-alanine + di-trans,octa-cis-undecaprenyl phosphate = di-trans,octa-cis-undecaprenyl diphospho-N-acetyl-alpha-D-muramoyl-L-alanyl-D-glutamyl-meso-2,6-diaminopimeloyl-D-alanyl-D-alanine + UMP. It functions in the pathway cell wall biogenesis; peptidoglycan biosynthesis. Functionally, catalyzes the initial step of the lipid cycle reactions in the biosynthesis of the cell wall peptidoglycan: transfers peptidoglycan precursor phospho-MurNAc-pentapeptide from UDP-MurNAc-pentapeptide onto the lipid carrier undecaprenyl phosphate, yielding undecaprenyl-pyrophosphoryl-MurNAc-pentapeptide, known as lipid I. In Herminiimonas arsenicoxydans, this protein is Phospho-N-acetylmuramoyl-pentapeptide-transferase.